A 479-amino-acid polypeptide reads, in one-letter code: Ribulose bisphosphate carboxylase large chain (479 aa).

A propeptide spanning residues 1–2 (MS) is cleaved from the precursor. Residues Asn-123 and Thr-173 each contribute to the substrate site. Residue Lys-175 is the Proton acceptor of the active site. Lys-177 serves as a coordination point for substrate. Residues Lys-201, Asp-203, and Glu-204 each contribute to the Mg(2+) site. Lys-201 carries the N6-carboxylysine modification. Residue Ser-208 is modified to Phosphoserine. Catalysis depends on His-294, which acts as the Proton acceptor. Residues Arg-295 and His-327 each coordinate substrate. The residue at position 330 (Thr-330) is a Phosphothreonine. Residue Ser-379 coordinates substrate.

Belongs to the RuBisCO large chain family. Type I subfamily. As to quaternary structure, heterohexadecamer of 8 large chains and 8 small chains; disulfide-linked. The disulfide link is formed within the large subunit homodimers. Mg(2+) serves as cofactor. The disulfide bond which can form in the large chain dimeric partners within the hexadecamer appears to be associated with oxidative stress and protein turnover.

The protein localises to the plastid. The protein resides in the chloroplast. The enzyme catalyses 2 (2R)-3-phosphoglycerate + 2 H(+) = D-ribulose 1,5-bisphosphate + CO2 + H2O. It catalyses the reaction D-ribulose 1,5-bisphosphate + O2 = 2-phosphoglycolate + (2R)-3-phosphoglycerate + 2 H(+). In terms of biological role, ruBisCO catalyzes two reactions: the carboxylation of D-ribulose 1,5-bisphosphate, the primary event in carbon dioxide fixation, as well as the oxidative fragmentation of the pentose substrate in the photorespiration process. Both reactions occur simultaneously and in competition at the same active site. This chain is Ribulose bisphosphate carboxylase large chain, found in Brassica oleracea (Wild cabbage).